We begin with the raw amino-acid sequence, 815 residues long: Vacuolar proton translocating ATPase 100 kDa subunit (815 aa).

The Cytoplasmic portion of the chain corresponds to 1–402; that stretch reads MSFLRPSIWR…NAYGIAHYRE (402 aa). Residues 403 to 421 traverse the membrane as a helical segment; the sequence is VNPAVLTIVTFPFLFGVMF. Topologically, residues 422–423 are vacuolar; it reads GD. Residues 424–440 traverse the membrane as a helical segment; it reads VGHGALLLLSALGLISL. Over 441 to 454 the chain is Cytoplasmic; sequence EKKLAGKKLNELIQ. Residues 455-484 form a helical membrane-spanning segment; it reads MPFDGRYVLFLMSLFSIYVGFIYNECFSIP. Residues 485 to 530 are Vacuolar-facing; sequence MNIFGSQYNLNSTTGLYTYQHTDRVYPVGVDPLWKGAPNELVYYNS. A helical transmembrane segment spans residues 531–550; that stretch reads FKMKLSIIFGVVQMSVGICF. At 551 to 571 the chain is on the cytoplasmic side; sequence SLLNYLNQKGPIKIVNILTQF. A helical transmembrane segment spans residues 572–592; that stretch reads VPQMIFLWSIFGYMSVLIILK. Residues 593–639 lie on the Vacuolar side of the membrane; it reads WVVPYRSFEVDKVDPPFILPTIIAMFLSPGGTPDVVFFSGQGAVQTA. A helical membrane pass occupies residues 640–659; it reads LLFLALISIPVMLVIKPLFM. The Cytoplasmic portion of the chain corresponds to 660-706; sequence KRFHFQEVERKKLGHHEEEHDDEALYTGHHGEEFEMGEVFVHQVIHT. Residues 707–731 form a helical membrane-spanning segment; the sequence is IEFVLGAVSNTASYLRLWALSLAHS. Over 732 to 749 the chain is Vacuolar; sequence ELSSVFWERILIGQVERG. The helical transmembrane segment at 750–788 threads the bilayer; that stretch reads NPFLAFVGFGAWLGASVAVLLLMESLSAFLHALRLHWVE. At 789 to 815 the chain is on the cytoplasmic side; the sequence is FQNKFYIGDGVRFIPYSATRILSEDDE.

Belongs to the V-ATPase 116 kDa subunit family. As to quaternary structure, the V-ATPase is a heteromultimeric enzyme.

It localises to the cytoplasmic vesicle membrane. The protein resides in the endosome membrane. Its subcellular location is the vacuole membrane. It is found in the lysosome membrane. In terms of biological role, essential component of the vacuolar proton pump (V-ATPase), a multimeric enzyme that catalyzes the translocation of protons across the membranes. Required for assembly and activity of the V-ATPase. Required in both the contractile vacuole system and the endosomal/lysosomal system. Also required for cytosolic pH regulation. The chain is Vacuolar proton translocating ATPase 100 kDa subunit (vatM) from Dictyostelium discoideum (Social amoeba).